A 338-amino-acid chain; its full sequence is Phenylalanine--tRNA ligase alpha subunit (338 aa).

Glutamate 252 provides a ligand contact to Mg(2+).

The protein belongs to the class-II aminoacyl-tRNA synthetase family. Phe-tRNA synthetase alpha subunit type 1 subfamily. As to quaternary structure, tetramer of two alpha and two beta subunits. Requires Mg(2+) as cofactor.

The protein resides in the cytoplasm. It catalyses the reaction tRNA(Phe) + L-phenylalanine + ATP = L-phenylalanyl-tRNA(Phe) + AMP + diphosphate + H(+). The protein is Phenylalanine--tRNA ligase alpha subunit of Pseudomonas aeruginosa (strain ATCC 15692 / DSM 22644 / CIP 104116 / JCM 14847 / LMG 12228 / 1C / PRS 101 / PAO1).